The primary structure comprises 524 residues: Acetyl-CoA hydrolase (524 aa).

A CoA-binding site is contributed by 275-279 (GIGNI). Residue glutamate 300 is the 5-glutamyl coenzyme A thioester intermediate of the active site. Residues asparagine 390 and glycine 394 each coordinate CoA.

The protein belongs to the acetyl-CoA hydrolase/transferase family.

It is found in the cytoplasm. It carries out the reaction acetyl-CoA + H2O = acetate + CoA + H(+). Presumably involved in regulating the intracellular acetyl-CoA pool for fatty acid and cholesterol synthesis and fatty acid oxidation. The chain is Acetyl-CoA hydrolase (ACH1) from Candida albicans (strain SC5314 / ATCC MYA-2876) (Yeast).